A 275-amino-acid polypeptide reads, in one-letter code: 3-methyl-2-oxobutanoate hydroxymethyltransferase (275 aa).

Mg(2+)-binding residues include aspartate 49 and aspartate 88. 3-methyl-2-oxobutanoate contacts are provided by residues 49–50 (DS), aspartate 88, and lysine 118. Glutamate 120 provides a ligand contact to Mg(2+). Glutamate 187 acts as the Proton acceptor in catalysis.

The protein belongs to the PanB family. As to quaternary structure, homodecamer; pentamer of dimers. Mg(2+) is required as a cofactor.

It localises to the cytoplasm. It carries out the reaction 3-methyl-2-oxobutanoate + (6R)-5,10-methylene-5,6,7,8-tetrahydrofolate + H2O = 2-dehydropantoate + (6S)-5,6,7,8-tetrahydrofolate. It functions in the pathway cofactor biosynthesis; (R)-pantothenate biosynthesis; (R)-pantoate from 3-methyl-2-oxobutanoate: step 1/2. Its function is as follows. Catalyzes the reversible reaction in which hydroxymethyl group from 5,10-methylenetetrahydrofolate is transferred onto alpha-ketoisovalerate to form ketopantoate. The polypeptide is 3-methyl-2-oxobutanoate hydroxymethyltransferase (Rhodospirillum centenum (strain ATCC 51521 / SW)).